Consider the following 644-residue polypeptide: Macrolide export ATP-binding/permease protein MacB (644 aa).

Residues 4-242 form the ABC transporter domain; sequence IECKNINRCF…SNVGRIREKA (239 aa). 40-47 contributes to the ATP binding site; it reads GQSGSGKS. The next 4 helical transmembrane spans lie at 270–290, 524–544, 574–594, and 607–627; these read LLTM…VALG, IALI…LVSV, LICI…SLVF, and AASV…FGFM.

Belongs to the ABC transporter superfamily. Macrolide exporter (TC 3.A.1.122) family. Homodimer.

Its subcellular location is the cell inner membrane. In terms of biological role, non-canonical ABC transporter that contains transmembrane domains (TMD), which form a pore in the inner membrane, and an ATP-binding domain (NBD), which is responsible for energy generation. Confers resistance against macrolides. The polypeptide is Macrolide export ATP-binding/permease protein MacB (Neisseria gonorrhoeae (strain ATCC 700825 / FA 1090)).